The primary structure comprises 2715 residues: MDLVITQELARAESQQDAASLKKAYELIKSANLGKSEFDPSESFSPDLFVLCAEQALKMRQPEVSEDCIQMYFKVKAPITQFLGRAHLCRAQMCAPKSAENLEEFENCVTEYMKAINFAKGEPRYYFLVYNASVLYWQMVRPFLKPGYRHHLIPSLSQIINVLSQTEEEDKEWRAELMLELLECYLQAGRKEEAARFCSTAAPFIKSHVPQKYRQIFSVMVRHELMDELQLKEEKKNSISLSVTFYINMLKAKAEQNDLPGDISVILRKAYRHLGHYNHQRFPSISEEKMLLLFELARFSLTLKCMEISSACLSDLKKMESKDPGKLIEMECLECESEALRLESKMKVYNRAAVEAQLDIIQRLDVALQRAVRLGDPRVIHVVCATQWNTCLPLLQHNLRHHLRKPLAGVADVLEKLDSLMTLLRCQVHMEMAQIEEDEDRLEPATEHLRKAARLDSLGLYRDRIQMASTRLRLCTTLYQAPERAEDKAIMAVEQAKKATPKDSVRKKRALLVNAGLALAPDAFQIVLDSENEAKVSTGKNRGRFTYLCAKAWHHTVSVDKAAGHLRRLGNENDKERIQIWAELAKVARKQGVWDVCRTASRFCLLYDNVKVKKLRLRRGKKKRGRDGSVQDTWSQPEVVLQRQVCPDLLRKFAEVGFIHAEATVHLLRSEGVELNDRAIPPEDLSQHPAGYVPEPPEVNAEWITYRTWIESLSRCAMNNWLRSAEIGQEIQEAWIVQNAVVYVLNHNHHLILAGRQKELVDALYHLLSIVKATGHSGDPVMLVTLCNTLARGLIISWIPVQAAEKSRKFMRPNAFHSPLDAGATSEIKTAVEVCEFALNLTNGSAPEETVPTGTRQQLIATWVKAKQLLQQQIGPRLGTEEQGTNEDVSSVTRVLVALEMYSCNGLGLMDFTVPSLAQLVKMASECNWSDPLVELQTLTRLTHFAHAARDHETTMACAHRALEMGIKYLKKFGPEESRLVAEMLCTATAIQGRSIMENLKGRKQLRLVAAKAFTESARFGGIAGSSALVMLAARHYWNAWLPLLSSAVYRKKAKGALKRLIGIINKTEARKQEKGKTLLLHQWPTADFQGGGTTEGYFLPGAEDDLALRAALYGLLFHSHADQDDWEGGLKVLDEAVQVLPRTAHRLLIFKHMVIVKAKLGQNFSMEIQKFKAESEDYLARMWHRLALNSPSVSGELACYNNAIQALQKPEMEWQKVEYLMEFGQWLHHRHFPLEDVVFHLRWAVEILLAMKPPGDVPEPQPTPDGEYVAVEMPPRSPVSEAEEAVSLEQLRSVRQLEALARVHILLALVLSPGAEGYEDCCLAAYAFFRHIWQVSLMTAGKSVLENRPLAATSSHLLLPKKEKENERSKEKEKERSKEKENERSKEKDKEKGKEEKVKEPKQSQSPAPIKQLEDLPMSIEEWASYSCPEEVLSVLKQDRSDSTVNPSSIQKPTYSLYFLDHLVKALQKMCLHELTVPVLQLGVLISDSVVGSKGLSDLYHLRLAHACSELKLREAAARHEEAVGQVCVSELEQASCRKEIALKKEKNKEPLLEESLPALNEQTLPVQPGEIKPLDAKDKILKMNGETGRDLDGTSFPHLWMLKAEVLLEMNLYQPARLLLSEAYLAFQELDEPCAEAQCLLLLAQLANKEKNYGQAKKMIAQAQHLGGSEEFWYNSTLTLAEALLSMEHSGREATVCHIFQKLINAFKILKKERPNRLPLLEFMITDLEARCLSLRVRVAQHSAVTEPTECSLLLKEMDDGLLEIERKFIDCGCKENCVDVKLERAKIKRLRAQNEKDEEQKTAYYLEAYGLAQGAVAEEEGRLHSIQGLYGLAQGAMAEEEGRLHSVQGLLSLQDLQNVNTPLMRKLARLKLGLVEMALDMLQFIWEEAHGQQSEQGSLEKLLADYLQNTSDYTSVGLQWFTLKRTLAHGALAQLGSLQPLSVGCVEIRARLLGLAGRALHLLAMQADPVHPTCYWEAGPSVGAKLSGLKSLELEVEEEGATKSSRDPPASRAAPEEHCRRGEDLKRRMVLAQQYLAQASEVLLQCLQVALGSGLLDVAAAASLEMVECVGTLDPATTCQFLALSQSCSASETMRDVLLAATANTSSSQLAALLQLQHQLRCQDRTTTSLGARVEQRLAAVSKAWQNLCVTEQHFNLLNEMPPTFWILFLHLSGDRSRLYGAAYEKPKFITAAKGKVQAVGGSCKVMRLAISPTAFSHLLACAQQFRKQTQAQVYSEDMALNIGSEPEGLQVEEKERPVQRLSSVLGPLEELLQPLFPLLSLSKARVQTPAVVADSGKSKGKDKERKTSTGQHSTVQPEVADKIVLVADRHLLELPLEGLSVFDEGTISSVSREFSLQMLWNRLHKEETEGGVKKEGRSRDPKKRSLAKKGRKGSIPRTIPPDCIIVDSDNFKFVVDPYEEAQGPEMLTPVSITQDILERFQDTFTSRWAGHLGSKHFPSQAQWEQALGSCSGFFFYGMESFLSHILVERLVAMNLQECQVAVLLDLARSYQSLKRHMESVEHRRSVGRWEANWRNSASPSEDEWRRGGEPRRGFSDLEGQAAAAPKLRAPSHHAQLGPVWAAAPSHRVVQAWTCLPSAAGAPALASALGSAPLPTHPHLPAPIPSSQLALPFLGLSPALGAASARDPPPATSRKAAAWTSSSACLCAPWGLRRGWSCVSSRGQDKGGLPLAALVLSCLDQKTIQTVSLFLI.

TPR repeat units lie at residues 89 to 122, 175 to 208, 261 to 295, 324 to 359, 426 to 459, 469 to 503, 807 to 845, 936 to 969, 1111 to 1144, and 1174 to 1211; these read CRAQMCAPKSAENLEEFENCVTEYMKAINFAKGE, AELMLELLECYLQAGRKEEAARFCSTAAPFIKSH, GDISVILRKAYRHLGHYNHQRFPSISEEKMLLLFE, PGKLIEMECLECESEALRLESKMKVYNRAAVEAQLD, CQVHMEMAQIEEDEDRLEPATEHLRKAARLDSLG, STRLRLCTTLYQAPERAEDKAIMAVEQAKKATPKD, SRKFMRPNAFHSPLDAGATSEIKTAVEVCEFALNLTNGS, LQTLTRLTHFAHAARDHETTMACAHRALEMGIKY, AALYGLLFHSHADQDDWEGGLKVLDEAVQVLPRT, and AESEDYLARMWHRLALNSPSVSGELACYNNAIQALQKP. Positions 1356–1412 are disordered; the sequence is SHLLLPKKEKENERSKEKEKERSKEKENERSKEKDKEKGKEEKVKEPKQSQSPAPIK. The span at 1361 to 1403 shows a compositional bias: basic and acidic residues; that stretch reads PKKEKENERSKEKEKERSKEKENERSKEKDKEKGKEEKVKEPK. Residues 1362–1401 are a coiled coil; the sequence is KKEKENERSKEKEKERSKEKENERSKEKDKEKGKEEKVKE. One copy of the TPR 11 repeat lies at 1639-1672; it reads AQCLLLLAQLANKEKNYGQAKKMIAQAQHLGGSE. Residues 1781–1810 are a coiled coil; that stretch reads VDVKLERAKIKRLRAQNEKDEEQKTAYYLE. Disordered regions lie at residues 2000–2023, 2294–2319, and 2371–2399; these read EEEGATKSSRDPPASRAAPEEHCR, AVVADSGKSKGKDKERKTSTGQHSTV, and ETEGGVKKEGRSRDPKKRSLAKKGRKGSI. Composition is skewed to basic and acidic residues over residues 2300-2311 and 2371-2383; these read GKSKGKDKERKT and ETEGGVKKEGRSR. Residues 2384-2398 show a composition bias toward basic residues; the sequence is DPKKRSLAKKGRKGS. TPR repeat units follow at residues 2399-2432 and 2504-2537; these read IPRTIPPDCIIVDSDNFKFVVDPYEEAQGPEMLT and VAVLLDLARSYQSLKRHMESVEHRRSVGRWEANW. The tract at residues 2541–2567 is disordered; sequence ASPSEDEWRRGGEPRRGFSDLEGQAAA. Positions 2546 to 2559 are enriched in basic and acidic residues; the sequence is DEWRRGGEPRRGFS.

Belongs to the CFAP46 family.

Its subcellular location is the cytoplasm. It localises to the cytoskeleton. It is found in the cilium axoneme. Its function is as follows. As part of the central apparatus of the cilium axoneme plays a role in cilium movement. The chain is Cilia- and flagella-associated protein 46 from Homo sapiens (Human).